Here is a 184-residue protein sequence, read N- to C-terminus: Probable RNA 2'-phosphotransferase (184 aa).

The protein belongs to the KptA/TPT1 family.

Its function is as follows. Removes the 2'-phosphate from RNA via an intermediate in which the phosphate is ADP-ribosylated by NAD followed by a presumed transesterification to release the RNA and generate ADP-ribose 1''-2''-cyclic phosphate (APPR&gt;P). May function as an ADP-ribosylase. This is Probable RNA 2'-phosphotransferase from Escherichia coli O6:K15:H31 (strain 536 / UPEC).